A 948-amino-acid polypeptide reads, in one-letter code: Phosphoenolpyruvate carboxylase (948 aa).

Active-site residues include His138 and Lys610.

It belongs to the PEPCase type 1 family. The cofactor is Mg(2+).

It carries out the reaction oxaloacetate + phosphate = phosphoenolpyruvate + hydrogencarbonate. Its function is as follows. Forms oxaloacetate, a four-carbon dicarboxylic acid source for the tricarboxylic acid cycle. This chain is Phosphoenolpyruvate carboxylase, found in Streptococcus gordonii (strain Challis / ATCC 35105 / BCRC 15272 / CH1 / DL1 / V288).